The sequence spans 511 residues: Maturase K (511 aa).

It belongs to the intron maturase 2 family. MatK subfamily.

The protein localises to the plastid. Its subcellular location is the chloroplast. Its function is as follows. Usually encoded in the trnK tRNA gene intron. Probably assists in splicing its own and other chloroplast group II introns. The protein is Maturase K of Acorus calamus var. americanus (American sweet flag).